The primary structure comprises 137 residues: Small ribosomal subunit protein uS9 (137 aa).

The tract at residues 114-137 (DSRMKERKKPGLRGARRGVQFSKR) is disordered. Residues 118–137 (KERKKPGLRGARRGVQFSKR) are compositionally biased toward basic residues.

The protein belongs to the universal ribosomal protein uS9 family.

In Rhodopirellula baltica (strain DSM 10527 / NCIMB 13988 / SH1), this protein is Small ribosomal subunit protein uS9.